A 357-amino-acid chain; its full sequence is Protein-glutamate methylesterase/protein-glutamine glutaminase 1 (357 aa).

Residues 7 to 125 (RAVIIDDSLL…QFDPEEIGNI (119 aa)) form the Response regulatory domain. 4-aspartylphosphate is present on Asp-58. Residues 162–344 (KKSPIQAICI…VEYIEPVTEI (183 aa)) form the CheB-type methylesterase domain. Active-site residues include Ser-174, His-201, and Asp-297.

The protein belongs to the CheB family. Post-translationally, phosphorylated by CheA. Phosphorylation of the N-terminal regulatory domain activates the methylesterase activity.

Its subcellular location is the cytoplasm. It carries out the reaction [protein]-L-glutamate 5-O-methyl ester + H2O = L-glutamyl-[protein] + methanol + H(+). The enzyme catalyses L-glutaminyl-[protein] + H2O = L-glutamyl-[protein] + NH4(+). Involved in chemotaxis. Part of a chemotaxis signal transduction system that modulates chemotaxis in response to various stimuli. Catalyzes the demethylation of specific methylglutamate residues introduced into the chemoreceptors (methyl-accepting chemotaxis proteins or MCP) by CheR. Also mediates the irreversible deamidation of specific glutamine residues to glutamic acid. The sequence is that of Protein-glutamate methylesterase/protein-glutamine glutaminase 1 from Leptospira interrogans serogroup Icterohaemorrhagiae serovar Lai (strain 56601).